A 673-amino-acid polypeptide reads, in one-letter code: Annexin A6 (673 aa).

The residue at position 2 (alanine 2) is an N-acetylalanine. Serine 13 is subject to Phosphoserine. 8 Annexin repeats span residues 20-91, 92-163, 175-247, 251-322, 363-434, 435-506, 521-595, and 599-670; these read FDAN…NLMR, PLAY…VLLQ, DLVQ…AVVK, STPE…KLCG, FNPD…GLMM, PPAH…SLAT, EDAQ…AIVQ, and NKPL…ALCG. A Phosphotyrosine modification is found at tyrosine 30. Lysine 63, lysine 68, lysine 75, and lysine 81 each carry N6-acetyllysine. Tyrosine 201 is subject to Phosphotyrosine. Residues lysine 306, lysine 370, and lysine 418 each carry the N6-acetyllysine modification. Serine 422 carries the phosphoserine modification. Lysine 483 bears the N6-acetyllysine mark. Residue serine 537 is modified to Phosphoserine. Residue lysine 620 is modified to N6-acetyllysine.

The protein belongs to the annexin family.

It localises to the cytoplasm. The protein localises to the melanosome. Functionally, may associate with CD21. May regulate the release of Ca(2+) from intracellular stores. The sequence is that of Annexin A6 (Anxa6) from Rattus norvegicus (Rat).